A 189-amino-acid polypeptide reads, in one-letter code: Large ribosomal subunit protein bL12c (189 aa).

Disordered stretches follow at residues 1–30 (MAATTTMATLNLPSLTSHPNSSTFPKHPQP) and 165–189 (EGVSKDDAEDAKKQLEDAGAKVSIV). A chloroplast-targeting transit peptide spans 1 to 56 (MAATTTMATLNLPSLTSHPNSSTFPKHPQPLQFPFRTTTNPISLSSTRTTRLRPIA). Polar residues predominate over residues 11–24 (NLPSLTSHPNSSTF). Residues 165–183 (EGVSKDDAEDAKKQLEDAG) show a composition bias toward basic and acidic residues.

In terms of assembly, component of the chloroplast large ribosomal subunit (LSU). Mature 70S chloroplast ribosomes of higher plants consist of a small (30S) and a large (50S) subunit. The 30S small subunit contains 1 molecule of ribosomal RNA (16S rRNA) and 24 different proteins. The 50S large subunit contains 3 rRNA molecules (23S, 5S and 4.5S rRNA) and 33 different proteins.

The protein localises to the plastid. The protein resides in the chloroplast. In terms of biological role, component of the chloroplast ribosome (chloro-ribosome), a dedicated translation machinery responsible for the synthesis of chloroplast genome-encoded proteins, including proteins of the transcription and translation machinery and components of the photosynthetic apparatus. The sequence is that of Large ribosomal subunit protein bL12c (RPL12) from Spinacia oleracea (Spinach).